The primary structure comprises 432 residues: Glutamate--cysteine ligase EgtA (432 aa).

It belongs to the glutamate--cysteine ligase type 2 family. EgtA subfamily.

The enzyme catalyses L-cysteine + L-glutamate + ATP = gamma-L-glutamyl-L-cysteine + ADP + phosphate + H(+). It participates in amino-acid biosynthesis; ergothioneine biosynthesis. Catalyzes the synthesis of gamma-glutamylcysteine (gamma-GC) which is used as substrate for the biosynthesis of the low-molecular thiol compound ergothioneine (ERG). ERG is one of the major redox buffers which protects bacteria against redox stressors and antibiotics; loss of ERG or mycothiol (MSH, the other major redox buffer in this bacteria) leads to respiratory alterations and bioenergetic deficiencies that negatively impact virulence. The polypeptide is Glutamate--cysteine ligase EgtA (egtA) (Mycobacterium tuberculosis (strain CDC 1551 / Oshkosh)).